Consider the following 127-residue polypeptide: Ribonuclease P protein component (127 aa).

This sequence belongs to the RnpA family. Consists of a catalytic RNA component (M1 or rnpB) and a protein subunit.

It carries out the reaction Endonucleolytic cleavage of RNA, removing 5'-extranucleotides from tRNA precursor.. RNaseP catalyzes the removal of the 5'-leader sequence from pre-tRNA to produce the mature 5'-terminus. It can also cleave other RNA substrates such as 4.5S RNA. The protein component plays an auxiliary but essential role in vivo by binding to the 5'-leader sequence and broadening the substrate specificity of the ribozyme. This chain is Ribonuclease P protein component, found in Rippkaea orientalis (strain PCC 8801 / RF-1) (Cyanothece sp. (strain PCC 8801)).